We begin with the raw amino-acid sequence, 464 residues long: AAC-rich mRNA clone AAC11 protein (464 aa).

Residues M1–I15 show a composition bias toward polar residues. 2 disordered regions span residues M1–N112 and S125–H464. Composition is skewed to low complexity over residues Q16 to Q65, N78 to N88, and I130 to N160. Residues L161–S174 show a composition bias toward polar residues. 3 DNA-binding regions (a.T hook) span residues K177–S189, K198–E210, and N224–E236. Over residues D240–G253 the composition is skewed to polar residues. Positions P255–D267 form a DNA-binding region, a.T hook 4. Residues N276 to G428 are compositionally biased toward low complexity. Residues L433–H464 show a composition bias toward polar residues.

The sequence is that of AAC-rich mRNA clone AAC11 protein (AAC11) from Dictyostelium discoideum (Social amoeba).